The primary structure comprises 261 residues: Global transcriptional regulator CodY (261 aa).

A GAF domain region spans residues 1–159 (MPNLLEKTRK…ASTVVGIQLL (159 aa)). The H-T-H motif DNA-binding region spans 207 to 226 (ASVIADRIGITRSVIVNALR).

This sequence belongs to the CodY family.

The protein resides in the cytoplasm. Its function is as follows. DNA-binding global transcriptional regulator which is involved in the adaptive response to starvation and acts by directly or indirectly controlling the expression of numerous genes in response to nutrient availability. During rapid exponential growth, CodY is highly active and represses genes whose products allow adaptation to nutrient depletion. This Streptococcus agalactiae serotype Ia (strain ATCC 27591 / A909 / CDC SS700) protein is Global transcriptional regulator CodY.